Here is a 268-residue protein sequence, read N- to C-terminus: Shikimate dehydrogenase (NADP(+)) (268 aa).

Residues 14–16 (SKS) and threonine 61 each bind shikimate. Lysine 65 acts as the Proton acceptor in catalysis. Shikimate is bound by residues asparagine 86 and aspartate 102. NADP(+) contacts are provided by residues 126–130 (GAGGA), 149–154 (NRTFLK), and methionine 213. Shikimate is bound at residue tyrosine 215. Residue glycine 238 participates in NADP(+) binding.

It belongs to the shikimate dehydrogenase family. Homodimer.

It catalyses the reaction shikimate + NADP(+) = 3-dehydroshikimate + NADPH + H(+). It functions in the pathway metabolic intermediate biosynthesis; chorismate biosynthesis; chorismate from D-erythrose 4-phosphate and phosphoenolpyruvate: step 4/7. Involved in the biosynthesis of the chorismate, which leads to the biosynthesis of aromatic amino acids. Catalyzes the reversible NADPH linked reduction of 3-dehydroshikimate (DHSA) to yield shikimate (SA). The sequence is that of Shikimate dehydrogenase (NADP(+)) from Haemophilus influenzae (strain PittGG).